A 334-amino-acid polypeptide reads, in one-letter code: Cobalt-precorrin-5B C(1)-methyltransferase (334 aa).

This sequence belongs to the CbiD family.

The enzyme catalyses Co-precorrin-5B + S-adenosyl-L-methionine = Co-precorrin-6A + S-adenosyl-L-homocysteine. Its pathway is cofactor biosynthesis; adenosylcobalamin biosynthesis; cob(II)yrinate a,c-diamide from sirohydrochlorin (anaerobic route): step 6/10. Functionally, catalyzes the methylation of C-1 in cobalt-precorrin-5B to form cobalt-precorrin-6A. The chain is Cobalt-precorrin-5B C(1)-methyltransferase from Methanoregula boonei (strain DSM 21154 / JCM 14090 / 6A8).